Consider the following 692-residue polypeptide: ATP-dependent RNA helicase MSS116, mitochondrial (692 aa).

The N-terminal 37 residues, 1–37, are a transit peptide targeting the mitochondrion; the sequence is MMIARFGKQVLRKNVLVSNRIHFPVISRGFHNSFINK. Residues 82-113 form a disordered region; it reads SQVTEQTELTKSEEEEKKKKNINTNTNKNDRK. The span at 89 to 99 shows a compositional bias: basic and acidic residues; it reads ELTKSEEEEKK. A Q motif motif is present at residues 130–158; sequence DFKNTGLIDDVILRALDRAHFKDLTPIQQ. In terms of domain architecture, Helicase ATP-binding spans 162–349; the sequence is VPLLETERGM…KQHINKKYDY (188 aa). ATP is bound at residue 175-182; that stretch reads AKTGTGKT. The DEAD box signature appears at 290-293; it reads DEAD. Residues 384–534 enclose the Helicase C-terminal domain; that stretch reads YVNQLVKDSP…QVHESSEIDN (151 aa). The tract at residues 643–692 is disordered; it reads NRYSGGGGNRSEKRFSFAGRGGNSGGHSGRGRGGRSGYSGGRSSQYSDWE. The span at 661–670 shows a compositional bias: gly residues; it reads GRGGNSGGHS.

This sequence belongs to the DEAD box helicase family. DDX18/HAS1 subfamily.

The protein localises to the mitochondrion matrix. The enzyme catalyses ATP + H2O = ADP + phosphate + H(+). ATP-dependent RNA helicase required for mitochondrial splicing of group I and II introns. Also required for efficient mitochondrial translation. The chain is ATP-dependent RNA helicase MSS116, mitochondrial (MSS116) from Lodderomyces elongisporus (strain ATCC 11503 / CBS 2605 / JCM 1781 / NBRC 1676 / NRRL YB-4239) (Yeast).